The primary structure comprises 325 residues: Probable isoaspartyl peptidase/L-asparaginase GA20639 (325 aa).

Catalysis depends on Thr-184, which acts as the Nucleophile. Residues Arg-212–Asp-215 and Thr-235–Gly-238 contribute to the substrate site.

Belongs to the Ntn-hydrolase family. As to quaternary structure, heterodimer of an alpha and beta chain produced by autocleavage. In terms of processing, cleaved into an alpha and beta chain by autocatalysis; this activates the enzyme. The N-terminal residue of the beta subunit is responsible for the nucleophile hydrolase activity.

The catalysed reaction is L-asparagine + H2O = L-aspartate + NH4(+). It carries out the reaction Cleavage of a beta-linked Asp residue from the N-terminus of a polypeptide.. Functionally, has both L-asparaginase and beta-aspartyl peptidase activity. Does not have aspartylglucosaminidase activity and is inactive toward GlcNAc-L-Asn. Likewise, has no activity toward glutamine. This is Probable isoaspartyl peptidase/L-asparaginase GA20639 from Drosophila pseudoobscura pseudoobscura (Fruit fly).